The chain runs to 337 residues: Tetraacyldisaccharide 4'-kinase (337 aa).

Residue 55–62 coordinates ATP; sequence NAGGTGKT.

This sequence belongs to the LpxK family.

It carries out the reaction a lipid A disaccharide + ATP = a lipid IVA + ADP + H(+). It participates in glycolipid biosynthesis; lipid IV(A) biosynthesis; lipid IV(A) from (3R)-3-hydroxytetradecanoyl-[acyl-carrier-protein] and UDP-N-acetyl-alpha-D-glucosamine: step 6/6. Functionally, transfers the gamma-phosphate of ATP to the 4'-position of a tetraacyldisaccharide 1-phosphate intermediate (termed DS-1-P) to form tetraacyldisaccharide 1,4'-bis-phosphate (lipid IVA). This chain is Tetraacyldisaccharide 4'-kinase, found in Dinoroseobacter shibae (strain DSM 16493 / NCIMB 14021 / DFL 12).